Reading from the N-terminus, the 46-residue chain is Myoregulin (46 aa).

Topologically, residues 1 to 21 are cytoplasmic; that stretch reads MSGKSWVLISTTSPQSLEDEI. A helical transmembrane segment spans residues 22-42; it reads LGRLLKILFVLFVDLMSIMYV. Topologically, residues 43–46 are lumenal; that stretch reads VITS.

Homooligomer. Monomer. Interacts with ATP2A1/SERCA1. Interacts as a monomer with ATP2A2/SERCA2; the interaction inhibits ATP2A2 activity. As to expression, specifically expressed in all skeletal muscles. Detected in both fast- and slow-type skeletal muscle. Not expressed in cardiac or smooth muscles.

The protein localises to the sarcoplasmic reticulum membrane. Its function is as follows. Inhibits the activity of ATP2A1/SERCA1 ATPase in sarcoplasmic reticulum by decreasing the apparent affinity of the ATPase for Ca(2+), thereby acting as a key regulator of skeletal muscle activity. Its high expression in adult skeletal muscle, suggests that it constitutes the predominant regulator of ATP2A1/SERCA1 in adult skeletal muscle. Also inhibits the activity of ATP2A2/SERCA2 and ATP2A3/SERCA3. This is Myoregulin from Mus musculus (Mouse).